A 212-amino-acid polypeptide reads, in one-letter code: Methylthioribulose-1-phosphate dehydratase (212 aa).

Zn(2+) is bound by residues His97 and His99.

This sequence belongs to the aldolase class II family. MtnB subfamily. Homotetramer. Requires Zn(2+) as cofactor.

It carries out the reaction 5-(methylsulfanyl)-D-ribulose 1-phosphate = 5-methylsulfanyl-2,3-dioxopentyl phosphate + H2O. The protein operates within amino-acid biosynthesis; L-methionine biosynthesis via salvage pathway; L-methionine from S-methyl-5-thio-alpha-D-ribose 1-phosphate: step 2/6. Functionally, catalyzes the dehydration of methylthioribulose-1-phosphate (MTRu-1-P) into 2,3-diketo-5-methylthiopentyl-1-phosphate (DK-MTP-1-P). The sequence is that of Methylthioribulose-1-phosphate dehydratase from Bacillus cereus (strain ATCC 10987 / NRS 248).